Consider the following 737-residue polypeptide: Transcriptional repressor CTCF (737 aa).

The residue at position 1 (Met1) is an N-acetylmethionine. Lys18 is covalently cross-linked (Glycyl lysine isopeptide (Lys-Gly) (interchain with G-Cter in SUMO2)). A Glycyl lysine isopeptide (Lys-Gly) (interchain with G-Cter in SUMO) cross-link involves residue Lys74. Residues Gln180–Lys211 are disordered. Positions Lys202–Lys211 are enriched in basic residues. Residue Lys219 forms a Glycyl lysine isopeptide (Lys-Gly) (interchain with G-Cter in SUMO2) linkage. The C2H2-type 1 zinc finger occupies Phe266 to His288. A Phosphothreonine modification is found at Thr289. The C2H2-type 2 zinc-finger motif lies at His294 to His316. Thr317 carries the phosphothreonine modification. 2 consecutive C2H2-type zinc fingers follow at residues His322–His345 and Phe351–His373. Phosphothreonine is present on Thr374. A C2H2-type 5 zinc finger spans residues Phe379–His401. Ser402 is modified (phosphoserine). 5 consecutive C2H2-type zinc fingers follow at residues Tyr407 to His430, Phe437 to His460, Lys467 to His489, Phe495 to His517, and Tyr523 to His546. The segment at Phe555–Cys577 adopts a C2H2-type 11; atypical zinc-finger fold. Disordered stretches follow at residues His573–Asn687 and Lys699–Thr727. Positions Lys593–Ser604 are enriched in basic residues. Phosphoserine occurs at positions 609, 610, and 612. Positions Ser610–Pro636 are enriched in acidic residues. The span at Glu637–Pro657 shows a compositional bias: pro residues. The span at Arg668–Asn687 shows a compositional bias: polar residues. Lys699 participates in a covalent cross-link: Glycyl lysine isopeptide (Lys-Gly) (interchain with G-Cter in SUMO); alternate. A Glycyl lysine isopeptide (Lys-Gly) (interchain with G-Cter in SUMO2); alternate cross-link involves residue Lys699. The segment covering Ala704 to Ala714 has biased composition (acidic residues).

It belongs to the CTCF zinc-finger protein family. Interacts with CHD8. Interacts with LLPH. Interacts with CENPE. Interacts with BRD2; promoting BRD2 recruitment to chromatin. Sumoylated on Lys-74 and Lys-699; sumoylation of CTCF contributes to the repressive function of CTCF on the MYC P2 promoter.

It localises to the nucleus. It is found in the nucleoplasm. Its subcellular location is the chromosome. The protein resides in the centromere. Its function is as follows. Chromatin binding factor that binds to DNA sequence specific sites and regulates the 3D structure of chromatin. Binds together strands of DNA, thus forming chromatin loops, and anchors DNA to cellular structures, such as the nuclear lamina. Defines the boundaries between active and heterochromatic DNA via binding to chromatin insulators, thereby preventing interaction between promoter and nearby enhancers and silencers. Plays a critical role in the epigenetic regulation. Participates in the allele-specific gene expression at the imprinted IGF2/H19 gene locus. On the maternal allele, binding within the H19 imprinting control region (ICR) mediates maternally inherited higher-order chromatin conformation to restrict enhancer access to IGF2. Mediates interchromosomal association between IGF2/H19 and WSB1/NF1 and may direct distant DNA segments to a common transcription factory. Regulates asynchronous replication of IGF2/H19. Plays a critical role in gene silencing over considerable distances in the genome. Preferentially interacts with unmethylated DNA, preventing spreading of CpG methylation and maintaining methylation-free zones. Inversely, binding to target sites is prevented by CpG methylation. Plays an important role in chromatin remodeling. Can dimerize when it is bound to different DNA sequences, mediating long-range chromatin looping. Causes local loss of histone acetylation and gain of histone methylation in the beta-globin locus, without affecting transcription. When bound to chromatin, it provides an anchor point for nucleosomes positioning. Seems to be essential for homologous X-chromosome pairing. May participate with Tsix in establishing a regulatable epigenetic switch for X chromosome inactivation. May play a role in preventing the propagation of stable methylation at the escape genes from X-inactivation. Involved in sister chromatid cohesion. Associates with both centromeres and chromosomal arms during metaphase and required for cohesin localization to CTCF sites. Plays a role in the recruitment of CENPE to the pericentromeric/centromeric regions of the chromosome during mitosis. Acts as a transcriptional repressor binding to promoters of vertebrate MYC gene and BAG1 gene. Also binds to the PLK and PIM1 promoters. Acts as a transcriptional activator of APP. Regulates APOA1/C3/A4/A5 gene cluster and controls MHC class II gene expression. Plays an essential role in oocyte and preimplantation embryo development by activating or repressing transcription. Seems to act as tumor suppressor. The polypeptide is Transcriptional repressor CTCF (Ctcf) (Rattus norvegicus (Rat)).